A 227-amino-acid polypeptide reads, in one-letter code: Cytochrome c oxidase subunit 2 (227 aa).

The Mitochondrial intermembrane portion of the chain corresponds to Met-1–Ser-14. The chain crosses the membrane as a helical span at residues Pro-15–Met-45. The Mitochondrial matrix portion of the chain corresponds to Leu-46–Gln-59. The helical transmembrane segment at Glu-60–Met-87 threads the bilayer. Topologically, residues Asp-88–Val-227 are mitochondrial intermembrane. Cu cation-binding residues include His-161, Cys-196, Glu-198, Cys-200, His-204, and Met-207. Glu-198 lines the Mg(2+) pocket. Tyr-218 bears the Phosphotyrosine mark.

Belongs to the cytochrome c oxidase subunit 2 family. Component of the cytochrome c oxidase (complex IV, CIV), a multisubunit enzyme composed of 14 subunits. The complex is composed of a catalytic core of 3 subunits MT-CO1, MT-CO2 and MT-CO3, encoded in the mitochondrial DNA, and 11 supernumerary subunits COX4I, COX5A, COX5B, COX6A, COX6B, COX6C, COX7A, COX7B, COX7C, COX8 and NDUFA4, which are encoded in the nuclear genome. The complex exists as a monomer or a dimer and forms supercomplexes (SCs) in the inner mitochondrial membrane with NADH-ubiquinone oxidoreductase (complex I, CI) and ubiquinol-cytochrome c oxidoreductase (cytochrome b-c1 complex, complex III, CIII), resulting in different assemblies (supercomplex SCI(1)III(2)IV(1) and megacomplex MCI(2)III(2)IV(2)). Found in a complex with TMEM177, COA6, COX18, COX20, SCO1 and SCO2. Interacts with TMEM177 in a COX20-dependent manner. Interacts with COX20. Interacts with COX16. Cu cation is required as a cofactor.

It is found in the mitochondrion inner membrane. The enzyme catalyses 4 Fe(II)-[cytochrome c] + O2 + 8 H(+)(in) = 4 Fe(III)-[cytochrome c] + 2 H2O + 4 H(+)(out). Its function is as follows. Component of the cytochrome c oxidase, the last enzyme in the mitochondrial electron transport chain which drives oxidative phosphorylation. The respiratory chain contains 3 multisubunit complexes succinate dehydrogenase (complex II, CII), ubiquinol-cytochrome c oxidoreductase (cytochrome b-c1 complex, complex III, CIII) and cytochrome c oxidase (complex IV, CIV), that cooperate to transfer electrons derived from NADH and succinate to molecular oxygen, creating an electrochemical gradient over the inner membrane that drives transmembrane transport and the ATP synthase. Cytochrome c oxidase is the component of the respiratory chain that catalyzes the reduction of oxygen to water. Electrons originating from reduced cytochrome c in the intermembrane space (IMS) are transferred via the dinuclear copper A center (CU(A)) of subunit 2 and heme A of subunit 1 to the active site in subunit 1, a binuclear center (BNC) formed by heme A3 and copper B (CU(B)). The BNC reduces molecular oxygen to 2 water molecules using 4 electrons from cytochrome c in the IMS and 4 protons from the mitochondrial matrix. The sequence is that of Cytochrome c oxidase subunit 2 (MT-CO2) from Nyctereutes procyonoides (Raccoon dog).